Consider the following 432-residue polypeptide: Glutamyl-tRNA reductase (432 aa).

Substrate contacts are provided by residues T55–R58, S113, E118–Q120, and Q124. Residue C56 is the Nucleophile of the active site. G193–I198 contacts NADP(+).

This sequence belongs to the glutamyl-tRNA reductase family. As to quaternary structure, homodimer.

It carries out the reaction (S)-4-amino-5-oxopentanoate + tRNA(Glu) + NADP(+) = L-glutamyl-tRNA(Glu) + NADPH + H(+). It participates in porphyrin-containing compound metabolism; protoporphyrin-IX biosynthesis; 5-aminolevulinate from L-glutamyl-tRNA(Glu): step 1/2. In terms of biological role, catalyzes the NADPH-dependent reduction of glutamyl-tRNA(Glu) to glutamate 1-semialdehyde (GSA). The polypeptide is Glutamyl-tRNA reductase (Paracidovorax citrulli (strain AAC00-1) (Acidovorax citrulli)).